Here is a 274-residue protein sequence, read N- to C-terminus: Large ribosomal subunit protein uL2cz/uL2cy (274 aa).

Disordered stretches follow at residues 1–24 (MAIHLYKTSTPSTRNGTVDSQVKS) and 223–274 (MNPV…RRSK). Residues 7–24 (KTSTPSTRNGTVDSQVKS) are compositionally biased toward polar residues.

It belongs to the universal ribosomal protein uL2 family. Part of the 50S ribosomal subunit.

It is found in the plastid. The protein resides in the chloroplast. This chain is Large ribosomal subunit protein uL2cz/uL2cy (rpl2-A), found in Nicotiana sylvestris (Wood tobacco).